We begin with the raw amino-acid sequence, 453 residues long: Pentatricopeptide repeat-containing protein At2g38420, mitochondrial (453 aa).

The transit peptide at 1 to 77 (MARSSSWHRM…CEPTPQAYRF (77 aa)) directs the protein to the mitochondrion. PPR repeat units lie at residues 107 to 141 (PESI…RCVP), 142 to 177 (SAYT…GVRL), 178 to 212 (EEST…SVIV), 213 to 249 (DPRL…RFSP), 250 to 284 (GLRD…RVEP), 285 to 319 (DLVC…GLAP), 320 to 354 (DVYT…GSEP), 355 to 389 (NVVT…GVNR), and 390 to 424 (NSHT…NVFV).

This sequence belongs to the PPR family. P subfamily.

Its subcellular location is the mitochondrion. The polypeptide is Pentatricopeptide repeat-containing protein At2g38420, mitochondrial (Arabidopsis thaliana (Mouse-ear cress)).